A 900-amino-acid chain; its full sequence is Alanine--tRNA ligase (900 aa).

Zn(2+)-binding residues include His604, His608, Cys708, and His712.

It belongs to the class-II aminoacyl-tRNA synthetase family. It depends on Zn(2+) as a cofactor.

The protein resides in the cytoplasm. It catalyses the reaction tRNA(Ala) + L-alanine + ATP = L-alanyl-tRNA(Ala) + AMP + diphosphate. Functionally, catalyzes the attachment of alanine to tRNA(Ala) in a two-step reaction: alanine is first activated by ATP to form Ala-AMP and then transferred to the acceptor end of tRNA(Ala). Also edits incorrectly charged Ser-tRNA(Ala) and Gly-tRNA(Ala) via its editing domain. The protein is Alanine--tRNA ligase of Saccharolobus islandicus (strain M.14.25 / Kamchatka #1) (Sulfolobus islandicus).